Here is a 271-residue protein sequence, read N- to C-terminus: MASENMTPQDYIGHHLNNLQLDLRTFSLVDPHNPPATFWTINIDSMFFSVVLGLLFLVLFRSVAKKATSGVPGKFQTAIELVIGFVNGSVKDMYHGKSKLIAPLALTIFVWVFLMNLMDLLPIDLLPYIAEHVLGLPALRVVPSADVNVTLSMALGVFILILFYSIKMKGIGGFTKELTLQPFNHWAFIPVNLILEGVSLLSKPVSLGLRLFGNMYAGELIFILIAGLLPWWSQWILNVPWAIFHILIITLQAFIFMVLTIVYLSMASEEH.

A run of 5 helical transmembrane segments spans residues 40–60, 100–120, 146–166, 220–240, and 242–262; these read TINI…LVLF, LIAP…LMDL, DVNV…FYSI, LIFI…LNVP, and AIFH…LTIV.

This sequence belongs to the ATPase A chain family. As to quaternary structure, F-type ATPases have 2 components, CF(1) - the catalytic core - and CF(0) - the membrane proton channel. CF(1) has five subunits: alpha(3), beta(3), gamma(1), delta(1), epsilon(1). CF(0) has three main subunits: a(1), b(2) and c(9-12). The alpha and beta chains form an alternating ring which encloses part of the gamma chain. CF(1) is attached to CF(0) by a central stalk formed by the gamma and epsilon chains, while a peripheral stalk is formed by the delta and b chains.

The protein resides in the cell inner membrane. Its function is as follows. Key component of the proton channel; it plays a direct role in the translocation of protons across the membrane. The chain is ATP synthase subunit a from Escherichia coli O1:K1 / APEC.